We begin with the raw amino-acid sequence, 1433 residues long: Inositol hexakisphosphate and diphosphoinositol-pentakisphosphate kinase 1 (1433 aa).

Position 64–65 (64–65 (KK)) interacts with substrate. ATP is bound by residues Arg-145, Lys-198, His-205, Arg-224, 248 to 251 (EEFM), and 257 to 259 (DVK). 224–225 (RK) lines the substrate pocket. The substrate site is built by Lys-259 and Arg-273. ATP is bound by residues Ser-275, Asp-320, and 332–334 (DVN). Position 337-340 (337-340 (SFVK)) interacts with substrate. Residues 382–453 (PTTSGTMMEL…VLDITRLLLA (72 aa)) are polyphosphoinositide-binding domain. The interval 915-1020 (GVEEEGSAPA…PTEMKQSGLG (106 aa)) is disordered. 2 positions are modified to phosphoserine: Ser-944 and Ser-987. The span at 1005–1020 (FSSSRPPTEMKQSGLG) shows a compositional bias: polar residues. Phosphoserine occurs at positions 1037 and 1073. The segment covering 1134-1143 (MHSSQASDNP) has biased composition (polar residues). Disordered stretches follow at residues 1134-1199 (MHSS…DQPS) and 1235-1257 (EPNQSPQVPPMETSQPYEEVSQP). Phosphoserine is present on residues Ser-1145 and Ser-1152. The segment covering 1168–1186 (SSGPSSTVSSAGPSSPTTV) has biased composition (low complexity). Polar residues-rich tracts occupy residues 1187–1199 (DGNSQFGFSDQPS) and 1236–1250 (PNQSPQVPPMETSQP).

This sequence belongs to the histidine acid phosphatase family. VIP1 subfamily. As to expression, widely expressed, with a higher expression in skeletal muscle, heart and brain.

It localises to the cytoplasm. Its subcellular location is the cytosol. It is found in the cell membrane. The catalysed reaction is 1D-myo-inositol hexakisphosphate + ATP = 1-diphospho-1D-myo-inositol 2,3,4,5,6-pentakisphosphate + ADP. It catalyses the reaction 5-diphospho-1D-myo-inositol 1,2,3,4,6-pentakisphosphate + ATP + H(+) = 1,5-bis(diphospho)-1D-myo-inositol 2,3,4,6-tetrakisphosphate + ADP. Functionally, bifunctional inositol kinase that acts in concert with the IP6K kinases IP6K1, IP6K2 and IP6K3 to synthesize the diphosphate group-containing inositol pyrophosphates diphosphoinositol pentakisphosphate, PP-InsP5, and bis-diphosphoinositol tetrakisphosphate, (PP)2-InsP4. PP-InsP5 and (PP)2-InsP4, also respectively called InsP7 and InsP8, regulate a variety of cellular processes, including apoptosis, vesicle trafficking, cytoskeletal dynamics, exocytosis, insulin signaling and neutrophil activation. Phosphorylates inositol hexakisphosphate (InsP6) at position 1 to produce PP-InsP5 which is in turn phosphorylated by IP6Ks to produce (PP)2-InsP4. Alternatively, phosphorylates PP-InsP5 at position 1, produced by IP6Ks from InsP6, to produce (PP)2-InsP4. Activated when cells are exposed to hyperosmotic stress. In Homo sapiens (Human), this protein is Inositol hexakisphosphate and diphosphoinositol-pentakisphosphate kinase 1.